Here is a 487-residue protein sequence, read N- to C-terminus: Probable cobyric acid synthase (487 aa).

The 187-residue stretch at 249–435 (DVDIAVVRFP…LHGIFNNASF (187 aa)) folds into the GATase cobBQ-type domain. The active-site Nucleophile is Cys-328. His-427 is a catalytic residue.

The protein belongs to the CobB/CobQ family. CobQ subfamily.

Its pathway is cofactor biosynthesis; adenosylcobalamin biosynthesis. Its function is as follows. Catalyzes amidations at positions B, D, E, and G on adenosylcobyrinic A,C-diamide. NH(2) groups are provided by glutamine, and one molecule of ATP is hydrogenolyzed for each amidation. The protein is Probable cobyric acid synthase of Methanocella arvoryzae (strain DSM 22066 / NBRC 105507 / MRE50).